We begin with the raw amino-acid sequence, 416 residues long: Transcription termination factor Rho (416 aa).

Residues 51 to 121 (LIYSYGELDI…LKLIYVNGEK (71 aa)) form the Rho RNA-BD domain. ATP is bound by residues 162 to 167 (GKGQRG), 174 to 179 (KAGKTT), and R205.

The protein belongs to the Rho family. In terms of assembly, homohexamer. The homohexamer assembles into an open ring structure.

Its function is as follows. Facilitates transcription termination by a mechanism that involves Rho binding to the nascent RNA, activation of Rho's RNA-dependent ATPase activity, and release of the mRNA from the DNA template. This chain is Transcription termination factor Rho, found in Streptobacillus moniliformis (strain ATCC 14647 / DSM 12112 / NCTC 10651 / 9901).